The following is a 494-amino-acid chain: Metal cation symporter ZIP14 (494 aa).

An N-terminal signal peptide occupies residues 1-34 (MTLRRASGCRQLTLTIGLALTLGLLQWPIGDVRG). Over 35-152 (QDGASPAQVL…PTEAEVWGYG (118 aa)) the chain is Extracellular. A helical transmembrane segment spans residues 153 to 173 (LLCVTVISLCSLVGASVVPFM). Over 174–181 (RKTFYKRL) the chain is Cytoplasmic. Residues 182–202 (LLYFIALAIGTLYSNALFQLI) traverse the membrane as a helical segment. Residues 203–219 (PEAFGFDPMEDYYVPKS) are Extracellular-facing. Residues 220 to 240 (AVVFGGFYLFFFTEKILKMIL) form a helical membrane-spanning segment. Topologically, residues 241–397 (KPKDTGGHGH…LLNAGMSIQQ (157 aa)) are cytoplasmic. The HHHGHXHX-motif motif lies at 248 to 255 (HGHGHSHF). The XEXPHE-motif signature appears at 376–381 (EEFPHE). The chain crosses the membrane as a helical span at residues 398–418 (ALFFNFLSACCCYLGMGFGIL). At 419 to 426 (AGNNFSPN) the chain is on the extracellular side. Residues 427 to 447 (WIFALAGGMFLYIALADMFPE) traverse the membrane as a helical segment. Topologically, residues 448–462 (MNEVSREEEEAGGSG) are cytoplasmic. Residues 463-483 (FLLTFALQNAGLLTGFAIMLV) traverse the membrane as a helical segment. Residues 484-494 (LTIYSGQIQLG) are Extracellular-facing.

This sequence belongs to the ZIP transporter (TC 2.A.5) family. As to quaternary structure, homotrimer.

The protein resides in the cell membrane. Its subcellular location is the apical cell membrane. The protein localises to the basolateral cell membrane. It localises to the early endosome membrane. It is found in the late endosome membrane. The protein resides in the lysosome membrane. The catalysed reaction is Zn(2+)(out) + 2 hydrogencarbonate(out) = Zn(2+)(in) + 2 hydrogencarbonate(in). The enzyme catalyses Mn(2+)(out) + 2 hydrogencarbonate(out) = Mn(2+)(in) + 2 hydrogencarbonate(in). It catalyses the reaction Fe(2+)(out) + 2 hydrogencarbonate(out) = Fe(2+)(in) + 2 hydrogencarbonate(in). It carries out the reaction Cd(2+)(out) + 2 hydrogencarbonate(out) = Cd(2+)(in) + 2 hydrogencarbonate(in). In terms of biological role, broad-scope metal ion transporter with a preference for zinc uptake. Also mediates cellular uptake of nontransferrin-bound iron. Electroneutral transporter of the plasma membrane mediating the cellular uptake of the divalent metal cations zinc, manganese and iron that are important for tissue homeostasis, metabolism, development and immunity. Functions as an energy-dependent symporter, transporting through the membranes an electroneutral complex composed of a divalent metal cation and two bicarbonate anions. Beside these endogenous cellular substrates, can also import cadmium a non-essential metal which is cytotoxic and carcinogenic. The polypeptide is Metal cation symporter ZIP14 (Danio rerio (Zebrafish)).